A 2285-amino-acid chain; its full sequence is Protein Ycf2 (2285 aa).

1638 to 1645 (GSIGTGRS) contributes to the ATP binding site.

This sequence belongs to the Ycf2 family.

It is found in the plastid. The protein resides in the chloroplast stroma. In terms of biological role, probable ATPase of unknown function. Its presence in a non-photosynthetic plant (Epifagus virginiana) and experiments in tobacco indicate that it has an essential function which is probably not related to photosynthesis. In Populus trichocarpa (Western balsam poplar), this protein is Protein Ycf2.